Reading from the N-terminus, the 442-residue chain is MITPKVLSGFKDRLPKDAIQKAQLLAKVSVVFQSFGFVPIETPHLEYAQTLLPDASSDIQKEIYRFKDHGDRDVALRFDLTVPLARFVSLHHQTLGMPFKRYAIGNVFRGERAQKGRYREFTQCDFDFIGSESLVCDAEIIQVIVASLKALDLEDFCVSINHRKILNGICEYFGISQVNEALRIVDKLEKIGLNGVEEELKKECGLNSNTIKELLELIQIKQNDLSHAEFFEKIAYLKDYNENLKKGIQDLERLYQLLGDLQISQNLYKIDFSIARGLGYYTGIVYETTLNEMKSLGSVCSGGRYDHLTKNFSKENLQGVGASIGIDRLIVALSEMQLLDERSTQAKVLIACMHEEYFSYANRLAESLRQSGIFSEVYPEAQKIKKPFSYANHKGHEFVAVIGEEEFKSETLSLKNMHSGMQLNCLSFLKALEIIGENDEDL.

The protein belongs to the class-II aminoacyl-tRNA synthetase family. In terms of assembly, homodimer.

The protein localises to the cytoplasm. It catalyses the reaction tRNA(His) + L-histidine + ATP = L-histidyl-tRNA(His) + AMP + diphosphate + H(+). This Helicobacter pylori (strain ATCC 700392 / 26695) (Campylobacter pylori) protein is Histidine--tRNA ligase (hisS).